We begin with the raw amino-acid sequence, 163 residues long: Lipoprotein signal peptidase (163 aa).

The next 3 helical transmembrane spans lie at 11 to 31, 63 to 83, and 88 to 108; these read ILIAVFVVIFDQVTKYIIATT, KMTFFFIITIIILIALVYFFI, and YNLFMQVAISLLFAGALGNFI. Catalysis depends on residues Asp118 and Asp136. Residues 131 to 151 traverse the membrane as a helical segment; that stretch reads IFNIADSSLTIGVILIIIALL.

It belongs to the peptidase A8 family.

It is found in the cell membrane. It carries out the reaction Release of signal peptides from bacterial membrane prolipoproteins. Hydrolyzes -Xaa-Yaa-Zaa-|-(S,diacylglyceryl)Cys-, in which Xaa is hydrophobic (preferably Leu), and Yaa (Ala or Ser) and Zaa (Gly or Ala) have small, neutral side chains.. It functions in the pathway protein modification; lipoprotein biosynthesis (signal peptide cleavage). Functionally, this protein specifically catalyzes the removal of signal peptides from prolipoproteins. This Staphylococcus aureus (strain MRSA252) protein is Lipoprotein signal peptidase.